We begin with the raw amino-acid sequence, 367 residues long: MTDLYIGMMSGTSLDGVDAVLVRFDDAGRPEPQADHVVPYPDAVKQAVLALQPRGHDELHRAQTLANRLAEIYAQAARELLQKSGRRAEDIRAIACHGQTVRHAPHDGYTVQIGNMAKLAELAGIDVIADFRSRDVAAGGHGAPLVPAFQQGAFSSPDEKRVILNIGGISNIARLHAGQEAIGFDCGPGNMLMDAWCLRHTGQPFDEDGNWAAGGAVHPPLLAAMLAEPYLTQPPPKSTGRDLFDDEWLAGKLGALPSAPPPRDVQATLLAFSARGIADAILEHCPGNQAVYVCGGGARNGALMAEIARQLPGQRVAAIEALGLPAQLIEAIAFAWLGWRFDRRQAGNLPSVTGAQGPRVLGALYPR.

Position 11–18 (11–18) interacts with ATP; that stretch reads GTSLDGVD.

It belongs to the anhydro-N-acetylmuramic acid kinase family.

The enzyme catalyses 1,6-anhydro-N-acetyl-beta-muramate + ATP + H2O = N-acetyl-D-muramate 6-phosphate + ADP + H(+). The protein operates within amino-sugar metabolism; 1,6-anhydro-N-acetylmuramate degradation. Its pathway is cell wall biogenesis; peptidoglycan recycling. In terms of biological role, catalyzes the specific phosphorylation of 1,6-anhydro-N-acetylmuramic acid (anhMurNAc) with the simultaneous cleavage of the 1,6-anhydro ring, generating MurNAc-6-P. Is required for the utilization of anhMurNAc either imported from the medium or derived from its own cell wall murein, and thus plays a role in cell wall recycling. This chain is Anhydro-N-acetylmuramic acid kinase, found in Chromobacterium violaceum (strain ATCC 12472 / DSM 30191 / JCM 1249 / CCUG 213 / NBRC 12614 / NCIMB 9131 / NCTC 9757 / MK).